Here is a 363-residue protein sequence, read N- to C-terminus: G-protein coupled receptor 6 (363 aa).

The Extracellular portion of the chain corresponds to 1–75; that stretch reads MNASAAALNE…SGLLLSAVNP (75 aa). N-linked (GlcNAc...) asparagine glycosylation is found at Asn2 and Asn9. The interval 29-48 is disordered; that stretch reads GAPDTGEWGPPAASAALGGG. An N-linked (GlcNAc...) asparagine glycan is attached at Asn52. The chain crosses the membrane as a helical span at residues 76–95; sequence WDVLLCVSGTVIAGENALVV. At 96 to 107 the chain is on the cytoplasmic side; sequence ALIASTPALRTP. Residues 108 to 131 traverse the membrane as a helical segment; that stretch reads MFVLVGSLATADLLAGCGLILHFV. Residues 132–143 are Extracellular-facing; it reads FQYVVPSETVSL. A helical membrane pass occupies residues 144 to 165; sequence LMVGFLVASFAASVSSLLAITV. Topologically, residues 166-186 are cytoplasmic; it reads DRYLSLYNALTYYSRRTLLGV. Residues 187–206 traverse the membrane as a helical segment; sequence HLLLAATWTVSLGLGLLPVL. At 207 to 231 the chain is on the extracellular side; the sequence is GWNCLADRTSCSVVRPLTRSHVALL. A helical transmembrane segment spans residues 232 to 250; sequence STSFFVVFGIMLHLYVRIC. Residues 251-278 are Cytoplasmic-facing; that stretch reads QVVWRHAHQIALQQHCLAPPHLAATRKG. Residues 279 to 305 form a helical membrane-spanning segment; sequence VGTLAVVLGTFGASWLPFAIYCVVGSQ. Over 306-310 the chain is Extracellular; the sequence is EDPAI. A helical membrane pass occupies residues 311 to 332; that stretch reads YTYATLLPATYNSMINPIIYAF. The Cytoplasmic segment spans residues 333-363; that stretch reads RNQEIQRALWLLFCGCFQSKVPFRSRSPSEV. The S-palmitoyl cysteine moiety is linked to residue Cys346. Phosphoserine occurs at positions 357, 359, and 361.

This sequence belongs to the G-protein coupled receptor 1 family. Mainly expressed in the brain. Selectively expressed in striatopallidal neurons in the striatum.

It is found in the cell membrane. Orphan receptor with constitutive G(s) signaling activity that activate cyclic AMP. Promotes neurite outgrowth and blocks myelin inhibition in neurons. This is G-protein coupled receptor 6 (Gpr6) from Mus musculus (Mouse).